A 120-amino-acid polypeptide reads, in one-letter code: MFVLSGYDALLIFLLLSALVPVLALTISYLIRPKGSGAFRTTTYESGVDPRGDSWIQFNIRYYMFALVFVVFDVETVFLYPWAVAFNQLGLLAFIEALIFIAILVVALVYAWRKGALEWT.

3 helical membrane-spanning segments follow: residues 11–31 (LIFLLLSALVPVLALTISYLI), 64–84 (MFALVFVVFDVETVFLYPWAV), and 89–109 (LGLLAFIEALIFIAILVVALV).

The protein belongs to the complex I subunit 3 family. NDH-1 can be composed of about 15 different subunits; different subcomplexes with different compositions have been identified which probably have different functions.

The protein localises to the cell inner membrane. The enzyme catalyses a plastoquinone + NADH + (n+1) H(+)(in) = a plastoquinol + NAD(+) + n H(+)(out). It carries out the reaction a plastoquinone + NADPH + (n+1) H(+)(in) = a plastoquinol + NADP(+) + n H(+)(out). In terms of biological role, NDH-1 shuttles electrons from an unknown electron donor, via FMN and iron-sulfur (Fe-S) centers, to quinones in the respiratory and/or the photosynthetic chain. The immediate electron acceptor for the enzyme in this species is believed to be plastoquinone. Couples the redox reaction to proton translocation, and thus conserves the redox energy in a proton gradient. Cyanobacterial NDH-1 also plays a role in inorganic carbon-concentration. In Gloeobacter violaceus (strain ATCC 29082 / PCC 7421), this protein is NAD(P)H-quinone oxidoreductase subunit 3.